A 546-amino-acid polypeptide reads, in one-letter code: Carotenoid 9,10(9',10')-cleavage dioxygenase (546 aa).

Positions 226, 274, 340, and 530 each coordinate Fe cation.

It belongs to the carotenoid oxygenase family. It depends on Fe(2+) as a cofactor. In vegetative and floral tissues.

The protein localises to the cytoplasm. It catalyses the reaction all-trans-zeaxanthin + 2 O2 = 4,9-dimethyldodeca-2,4,6,8,10-pentaenedial + 2 (3R)-hydroxy-beta-ionone. In terms of biological role, cleaves a variety of carotenoids symmetrically at both the 9-10 and 9'-10' double bonds. Catalyzes the formation of 4,9-dimethyldodeca-2,4,6,8,10-pentaene-1,12-dialdehyde and probably hydroxydihydro-beta-ionone from zeaxanthin. The polypeptide is Carotenoid 9,10(9',10')-cleavage dioxygenase (CCD) (Crocus sativus (Saffron)).